The sequence spans 610 residues: Probable galacturonosyltransferase 5 (610 aa).

Over 1 to 6 (MNQVRR) the chain is Cytoplasmic. Residues 7-27 (WQRILILSLLLLSVLAPIVFV) form a helical; Signal-anchor for type II membrane protein membrane-spanning segment. The Lumenal portion of the chain corresponds to 28–610 (SNRLKSITSV…PHLQRCNIHD (583 aa)). Positions 86 to 101 (LSNSSDKSNDTVQSNE) are enriched in polar residues. Positions 86–170 (LSNSSDKSND…KNTRVQLERA (85 aa)) are disordered. N-linked (GlcNAc...) asparagine glycosylation is found at N88 and N94. The segment covering 110–123 (EVDKGNNHKPKEEQ) has biased composition (basic and acidic residues). Polar residues predominate over residues 124–135 (AVSQKTTVSSNA). Positions 139 to 170 (ISARDIQLNHKTEFRPPSSKSEKNTRVQLERA) are enriched in basic and acidic residues. Residues N196, N338, N401, and N475 are each glycosylated (N-linked (GlcNAc...) asparagine).

It belongs to the glycosyltransferase 8 family. As to expression, expressed in roots, inflorescences, siliques, leaves and stems.

It is found in the golgi apparatus membrane. It functions in the pathway glycan metabolism; pectin biosynthesis. Its function is as follows. May be involved in pectin and/or xylans biosynthesis in cell walls. This chain is Probable galacturonosyltransferase 5 (GAUT5), found in Arabidopsis thaliana (Mouse-ear cress).